We begin with the raw amino-acid sequence, 454 residues long: tRNA modification GTPase MnmE (454 aa).

Positions 26, 84, and 123 each coordinate (6S)-5-formyl-5,6,7,8-tetrahydrofolate. Residues 219–378 (GLQVVIAGKP…LVDAITAHAG (160 aa)) form the TrmE-type G domain. Residue Asn229 participates in K(+) binding. GTP is bound by residues 229–234 (NAGKSS), 248–254 (TDIAGTT), and 273–276 (DTAG). Ser233 is a Mg(2+) binding site. 3 residues coordinate K(+): Thr248, Ile250, and Thr253. Position 254 (Thr254) interacts with Mg(2+). Residue Lys454 coordinates (6S)-5-formyl-5,6,7,8-tetrahydrofolate.

The protein belongs to the TRAFAC class TrmE-Era-EngA-EngB-Septin-like GTPase superfamily. TrmE GTPase family. As to quaternary structure, homodimer. Heterotetramer of two MnmE and two MnmG subunits. Requires K(+) as cofactor.

It is found in the cytoplasm. Its function is as follows. Exhibits a very high intrinsic GTPase hydrolysis rate. Involved in the addition of a carboxymethylaminomethyl (cmnm) group at the wobble position (U34) of certain tRNAs, forming tRNA-cmnm(5)s(2)U34. The sequence is that of tRNA modification GTPase MnmE from Acinetobacter baumannii (strain ATCC 17978 / DSM 105126 / CIP 53.77 / LMG 1025 / NCDC KC755 / 5377).